A 280-amino-acid polypeptide reads, in one-letter code: UPF0276 protein NMA0228 (280 aa).

This sequence belongs to the UPF0276 family.

The chain is UPF0276 protein NMA0228 from Neisseria meningitidis serogroup A / serotype 4A (strain DSM 15465 / Z2491).